Here is a 534-residue protein sequence, read N- to C-terminus: Zinc finger protein 703-A (534 aa).

Disordered regions lie at residues 1–35 (MNCSPPGSSTDTERQSSSSGTPATPCPTLAPTHPV), 90–251 (SQIG…VAPV), and 300–320 (QLPGTLGLPGKPPSSSPLTGA). Low complexity-rich tracts occupy residues 15–34 (QSSSSGTPATPCPTLAPTHP), 115–124 (RSSSLKLGES), and 146–155 (GSSAGGSADK). A compositionally biased stretch (polar residues) spans 173–182 (SPSSRVSSPG). Residues 185 to 200 (CDSKNNESQEKKEPEA) are compositionally biased toward basic and acidic residues. Residues 204–217 (SLETSQANPTLTRA) are compositionally biased toward polar residues. Positions 218 to 229 (SISNSSAESSQS) are enriched in low complexity. Residues 230 to 239 (GDVTPSSKSD) show a composition bias toward polar residues. The C2H2-type zinc-finger motif lies at 406 to 434 (HICNWVSASGPCDKRFATSEELLAHLRTH).

Belongs to the Elbow/Noc family.

Its subcellular location is the nucleus. The protein localises to the cytoplasm. Its function is as follows. Transcriptional corepressor which does not bind directly to DNA and may regulate transcription through recruitment of histone deacetylases to gene promoters. Regulates cell adhesion, migration and proliferation. Involved in specification of the lateral neural plate border (NPB). May be required for segmental gene expression during hindbrain development. The protein is Zinc finger protein 703-A (znf703-a) of Xenopus laevis (African clawed frog).